A 353-amino-acid chain; its full sequence is N6-methyladenosine RNA demethylase ALKB1 (353 aa).

One can recognise a Fe2OG dioxygenase domain in the interval 223 to 352; it reads IAQAAIVNFY…RINLNVRQMR (130 aa). H241, D243, and H308 together coordinate Fe cation. R343 contacts 2-oxoglutarate.

This sequence belongs to the alkB family. Fe(2+) serves as cofactor.

It is found in the cytoplasm. The protein resides in the P-body. The enzyme catalyses an N(6)-methyladenosine in mRNA + 2-oxoglutarate + O2 = an adenosine in mRNA + formaldehyde + succinate + CO2. RNA demethylase that regulates the stability of mRNAs through an m(6)A-dependent manner. M6A is a modification present at internal sites of mRNAs and some non-coding RNAs and plays a role in mRNA stability and processing. Plays a role in pathogenicity towards plant host. The sequence is that of N6-methyladenosine RNA demethylase ALKB1 from Pyricularia oryzae (strain 70-15 / ATCC MYA-4617 / FGSC 8958) (Rice blast fungus).